A 342-amino-acid chain; its full sequence is Manganese-dependent ADP-ribose/CDP-alcohol diphosphatase (342 aa).

An N-acetylmethionine modification is found at M1. Zn(2+) is bound by residues D25, Q27, D74, N110, H241, H278, and H280.

Belongs to the ADPRibase-Mn family. Monomer. Mg(2+) is required as a cofactor.

It catalyses the reaction CDP-choline + H2O = phosphocholine + CMP + 2 H(+). The catalysed reaction is ADP-D-ribose + H2O = D-ribose 5-phosphate + AMP + 2 H(+). It carries out the reaction CDP-glycerol + H2O = sn-glycerol 3-phosphate + CMP + 2 H(+). Functionally, hydrolyzes ADP-ribose, IDP-ribose, CDP-glycerol, CDP-choline and CDP-ethanolamine, but not other non-reducing ADP-sugars or CDP-glucose. May be involved in immune cell signaling as suggested by the second-messenger role of ADP-ribose, which activates TRPM2 as a mediator of oxidative/nitrosative stress. This is Manganese-dependent ADP-ribose/CDP-alcohol diphosphatase (ADPRM) from Homo sapiens (Human).